We begin with the raw amino-acid sequence, 119 residues long: Holo-[acyl-carrier-protein] synthase (119 aa).

Mg(2+)-binding residues include D7 and E56.

The protein belongs to the P-Pant transferase superfamily. AcpS family. Requires Mg(2+) as cofactor.

Its subcellular location is the cytoplasm. It carries out the reaction apo-[ACP] + CoA = holo-[ACP] + adenosine 3',5'-bisphosphate + H(+). In terms of biological role, transfers the 4'-phosphopantetheine moiety from coenzyme A to a Ser of acyl-carrier-protein. This is Holo-[acyl-carrier-protein] synthase from Chlamydia trachomatis serovar D (strain ATCC VR-885 / DSM 19411 / UW-3/Cx).